We begin with the raw amino-acid sequence, 283 residues long: ATP phosphoribosyltransferase (283 aa).

Belongs to the ATP phosphoribosyltransferase family. Long subfamily. As to quaternary structure, equilibrium between an active dimeric form, an inactive hexameric form and higher aggregates. Interconversion between the various forms is largely reversible and is influenced by the natural substrates and inhibitors of the enzyme. Mg(2+) serves as cofactor.

It localises to the cytoplasm. The enzyme catalyses 1-(5-phospho-beta-D-ribosyl)-ATP + diphosphate = 5-phospho-alpha-D-ribose 1-diphosphate + ATP. The protein operates within amino-acid biosynthesis; L-histidine biosynthesis; L-histidine from 5-phospho-alpha-D-ribose 1-diphosphate: step 1/9. Feedback inhibited by histidine. In terms of biological role, catalyzes the condensation of ATP and 5-phosphoribose 1-diphosphate to form N'-(5'-phosphoribosyl)-ATP (PR-ATP). Has a crucial role in the pathway because the rate of histidine biosynthesis seems to be controlled primarily by regulation of HisG enzymatic activity. This chain is ATP phosphoribosyltransferase, found in Mycobacterium sp. (strain KMS).